The sequence spans 195 residues: Imidazoleglycerol-phosphate dehydratase (195 aa).

It belongs to the imidazoleglycerol-phosphate dehydratase family.

It is found in the cytoplasm. It catalyses the reaction D-erythro-1-(imidazol-4-yl)glycerol 3-phosphate = 3-(imidazol-4-yl)-2-oxopropyl phosphate + H2O. It participates in amino-acid biosynthesis; L-histidine biosynthesis; L-histidine from 5-phospho-alpha-D-ribose 1-diphosphate: step 6/9. In Desulfosudis oleivorans (strain DSM 6200 / JCM 39069 / Hxd3) (Desulfococcus oleovorans), this protein is Imidazoleglycerol-phosphate dehydratase.